The following is a 24-amino-acid chain: Bombinin (24 aa).

Asn24 is modified (asparagine amide).

Belongs to the bombinin family. In terms of tissue distribution, expressed by the skin glands.

The protein localises to the secreted. Has antimicrobial and hemolytic activities. The protein is Bombinin of Bombina variegata (Yellow-bellied toad).